Consider the following 261-residue polypeptide: U11/U12 small nuclear ribonucleoprotein 31 kDa protein (261 aa).

A disordered region spans residues 18-51 (YYRYSSVAAPPPSNPKHQPSSSAKSSAPGGGSGG). In terms of domain architecture, RRM spans 57–135 (STLYVSNLDF…RKLTVSIAAD (79 aa)). The segment at 153–169 (RCYECGDEGHLSYECPK) adopts a CCHC-type zinc-finger fold. Residues 165 to 261 (YECPKNQLGP…YFSDESDDED (97 aa)) are disordered. Over residues 226–235 (AGERLRKREA) the composition is skewed to basic and acidic residues.

In terms of assembly, component of the U11/U12 snRNPs that are part of the U12-type spliceosome. As to expression, ubiquitous. Abundantly expressed in the shoot apical neristem.

It is found in the nucleus. In terms of biological role, RNA chaperone required for proper U12 intron splicing and for normal growth and development of plants. Mainly responsible for meristem activity. Plays a role in regulating cell division. The polypeptide is U11/U12 small nuclear ribonucleoprotein 31 kDa protein (SNRNP31) (Arabidopsis thaliana (Mouse-ear cress)).